Here is a 235-residue protein sequence, read N- to C-terminus: UPF0173 metal-dependent hydrolase Oant_3663 (235 aa).

Belongs to the UPF0173 family.

This is UPF0173 metal-dependent hydrolase Oant_3663 from Brucella anthropi (strain ATCC 49188 / DSM 6882 / CCUG 24695 / JCM 21032 / LMG 3331 / NBRC 15819 / NCTC 12168 / Alc 37) (Ochrobactrum anthropi).